A 369-amino-acid chain; its full sequence is LIM homeobox transcription factor 1-beta (369 aa).

LIM zinc-binding domains are found at residues 23 to 73 (CEGC…CKQD) and 82 to 135 (CSGC…CKGD). Positions 143 to 196 (LSSVSPDESDSVKSEDEDGDMKPAKGQGSQSKGGGDDGKDPRRPKRPRTILTTQ) are disordered. The segment at residues 186–245 (PKRPRTILTTQQRRAFKASFEVSSKPCRKVRETLAAETGLSVRVVQVWFQNQRAKMKKLA) is a DNA-binding region (homeobox).

As to quaternary structure, interacts with DHX9.

It localises to the nucleus. In terms of biological role, transcription factor involved in the regulation of podocyte-expressed genes. Essential for the specification of dorsal limb fate at both the zeugopodal and autopodal levels. In Mesocricetus auratus (Golden hamster), this protein is LIM homeobox transcription factor 1-beta (LMX1B).